Here is a 1066-residue protein sequence, read N- to C-terminus: Beta-galactosidase (1066 aa).

Substrate-binding residues include Asn110 and Asp209. Asp209 provides a ligand contact to Na(+). Glu432, His434, and Glu477 together coordinate Mg(2+). Residues Glu477 and 553 to 556 (EYAH) each bind substrate. Glu477 serves as the catalytic Proton donor. Glu553 acts as the Nucleophile in catalysis. Asn613 contributes to the Mg(2+) binding site. Na(+) is bound by residues Phe617 and Asn620. The substrate site is built by Asn620 and Trp1041.

This sequence belongs to the glycosyl hydrolase 2 family. Homotetramer. Mg(2+) serves as cofactor. It depends on Na(+) as a cofactor.

The enzyme catalyses Hydrolysis of terminal non-reducing beta-D-galactose residues in beta-D-galactosides.. The chain is Beta-galactosidase from Yersinia pseudotuberculosis serotype O:1b (strain IP 31758).